The chain runs to 368 residues: tRNA-specific 2-thiouridylase MnmA (368 aa).

ATP-binding positions include glycine 11 to serine 18 and methionine 37. Residues asparagine 97–aspartate 99 form an interaction with target base in tRNA region. Cysteine 102 acts as the Nucleophile in catalysis. A disulfide bridge connects residues cysteine 102 and cysteine 199. Residue glycine 127 coordinates ATP. Residues lysine 149–glutamine 151 are interaction with tRNA. Cysteine 199 serves as the catalytic Cysteine persulfide intermediate. The tract at residues arginine 311 to tyrosine 312 is interaction with tRNA.

It belongs to the MnmA/TRMU family. In terms of assembly, interacts with TusE.

Its subcellular location is the cytoplasm. It carries out the reaction S-sulfanyl-L-cysteinyl-[protein] + uridine(34) in tRNA + AH2 + ATP = 2-thiouridine(34) in tRNA + L-cysteinyl-[protein] + A + AMP + diphosphate + H(+). Its function is as follows. Catalyzes the 2-thiolation of uridine at the wobble position (U34) of tRNA(Lys), tRNA(Glu) and tRNA(Gln), leading to the formation of s(2)U34, the first step of tRNA-mnm(5)s(2)U34 synthesis. Sulfur is provided by IscS, via a sulfur-relay system. Binds ATP and its substrate tRNAs. This chain is tRNA-specific 2-thiouridylase MnmA, found in Shigella boydii serotype 4 (strain Sb227).